The chain runs to 376 residues: Glucose-1-phosphate adenylyltransferase (376 aa).

Alpha-D-glucose 1-phosphate contacts are provided by residues Tyr101, Gly166, 181–182 (EK), and Ser192.

Belongs to the bacterial/plant glucose-1-phosphate adenylyltransferase family. In terms of assembly, homotetramer.

It carries out the reaction alpha-D-glucose 1-phosphate + ATP + H(+) = ADP-alpha-D-glucose + diphosphate. The protein operates within glycan biosynthesis; glycogen biosynthesis. Functionally, involved in the biosynthesis of ADP-glucose, a building block required for the elongation reactions to produce glycogen. Catalyzes the reaction between ATP and alpha-D-glucose 1-phosphate (G1P) to produce pyrophosphate and ADP-Glc. In Bacillus cereus (strain ATCC 10987 / NRS 248), this protein is Glucose-1-phosphate adenylyltransferase.